A 184-amino-acid chain; its full sequence is Large ribosomal subunit protein uL6 (184 aa).

This sequence belongs to the universal ribosomal protein uL6 family. In terms of assembly, part of the 50S ribosomal subunit.

In terms of biological role, this protein binds to the 23S rRNA, and is important in its secondary structure. It is located near the subunit interface in the base of the L7/L12 stalk, and near the tRNA binding site of the peptidyltransferase center. This is Large ribosomal subunit protein uL6 from Thermosipho africanus (strain TCF52B).